A 994-amino-acid polypeptide reads, in one-letter code: Protein translocase subunit SecA (994 aa).

Residues Q85, 103-107 (GEGKT), and D492 each bind ATP. The span at 868 to 888 (IPDGAGPVADAQPVRPAAARQ) shows a compositional bias: low complexity. The disordered stretch occupies residues 868–994 (IPDGAGPVAD…HGDPARRNTE (127 aa)). The segment covering 889–900 (TPPPPSPVPSAP) has biased composition (pro residues). 4 residues coordinate Zn(2+): C973, C975, C984, and H985. Over residues 984 to 994 (CHGDPARRNTE) the composition is skewed to basic and acidic residues.

This sequence belongs to the SecA family. In terms of assembly, monomer and homodimer. Part of the essential Sec protein translocation apparatus which comprises SecA, SecYEG and auxiliary proteins SecDF. Other proteins may also be involved. Zn(2+) serves as cofactor.

Its subcellular location is the cell membrane. The protein localises to the cytoplasm. It catalyses the reaction ATP + H2O + cellular proteinSide 1 = ADP + phosphate + cellular proteinSide 2.. Its function is as follows. Part of the Sec protein translocase complex. Interacts with the SecYEG preprotein conducting channel. Has a central role in coupling the hydrolysis of ATP to the transfer of proteins into and across the cell membrane, serving as an ATP-driven molecular motor driving the stepwise translocation of polypeptide chains across the membrane. This Frankia casuarinae (strain DSM 45818 / CECT 9043 / HFP020203 / CcI3) protein is Protein translocase subunit SecA.